The sequence spans 379 residues: Succinyl-diaminopimelate desuccinylase (379 aa).

His70 provides a ligand contact to Zn(2+). Asp72 is a catalytic residue. Asp103 serves as a coordination point for Zn(2+). The Proton acceptor role is filled by Glu137. Residues Glu138, Glu166, and His352 each coordinate Zn(2+).

Belongs to the peptidase M20A family. DapE subfamily. Homodimer. The cofactor is Zn(2+). Requires Co(2+) as cofactor.

It carries out the reaction N-succinyl-(2S,6S)-2,6-diaminopimelate + H2O = (2S,6S)-2,6-diaminopimelate + succinate. Its pathway is amino-acid biosynthesis; L-lysine biosynthesis via DAP pathway; LL-2,6-diaminopimelate from (S)-tetrahydrodipicolinate (succinylase route): step 3/3. Catalyzes the hydrolysis of N-succinyl-L,L-diaminopimelic acid (SDAP), forming succinate and LL-2,6-diaminopimelate (DAP), an intermediate involved in the bacterial biosynthesis of lysine and meso-diaminopimelic acid, an essential component of bacterial cell walls. This is Succinyl-diaminopimelate desuccinylase from Shewanella baltica (strain OS155 / ATCC BAA-1091).